The chain runs to 352 residues: tRNA pseudouridine synthase D (352 aa).

Catalysis depends on D78, which acts as the Nucleophile. The region spanning 153 to 299 (GVPNYYGEQR…LDQDRRPLLL (147 aa)) is the TRUD domain.

Belongs to the pseudouridine synthase TruD family.

It carries out the reaction uridine(13) in tRNA = pseudouridine(13) in tRNA. Responsible for synthesis of pseudouridine from uracil-13 in transfer RNAs. The chain is tRNA pseudouridine synthase D from Aeromonas salmonicida (strain A449).